The following is a 252-amino-acid chain: MARRRRRHRGPRRPRPPGPTGAVPTAQSQVTSTPNSEPVVRSAPAAAPPPPPAGGPPPSCSLLLRQWLQVPESASDDDDDDDWPDSPPPEPAPEARPTAAAPRPRSPPPGAGPGGGADPSHPPSRPFRLPPRLALRLRVTAEHLARLRLRRAGGEGAPEPPATPATPATPATPATPATPARVRFSPHVRVRHLVVWASAARLARRGSWARERADRARFRRRVAEAEAVIGPCLGPKARARALARGAGPANSV.

Residues 1 to 15 (MARRRRRHRGPRRPR) are compositionally biased toward basic residues. The interval 1–17 (MARRRRRHRGPRRPRPP) is required for nucleolar localization. 2 disordered regions span residues 1-129 (MARR…PFRL) and 150-179 (RRAGGEGAPEPPATPATPATPATPATPATP). Polar residues predominate over residues 25–36 (TAQSQVTSTPNS). The segment covering 46-59 (AAPPPPPAGGPPPS) has biased composition (pro residues). The segment covering 74-84 (ASDDDDDDDWP) has biased composition (acidic residues). Composition is skewed to pro residues over residues 85–94 (DSPPPEPAPE) and 120–129 (SHPPSRPFRL). The Nuclear export signal motif lies at 129 to 138 (LPPRLALRLR). 6 repeat units span residues 162 to 164 (ATP), 165 to 167 (ATP), 168 to 170 (ATP), 171 to 173 (ATP), 174 to 176 (ATP), and 177 to 179 (ATP). Positions 162-179 (ATPATPATPATPATPATP) are 6 X 3 AA tandem repeats of A-T-P. Residues 165 to 179 (ATPATPATPATPATP) are compositionally biased toward low complexity. The segment at 179-192 (PARVRFSPHVRVRH) is binding to PP1CA. Positions 179–192 (PARVRFSPHVRVRH) are interaction with host PPP1CA. The segment at 194–252 (VVWASAARLARRGSWARERADRARFRRRVAEAEAVIGPCLGPKARARALARGAGPANSV) is important for interferon resistance. The Bipartite nuclear localization signal signature appears at 204 to 222 (RRGSWARERADRARFRRRV). Residues 222–237 (VAEAEAVIGPCLGPKA) are interaction with host EIF2S1/EIF-2ALPHA.

It belongs to the PPP1R15 family. As to quaternary structure, interacts with host PPP1CA to form a high-molecular-weight complex that dephosphorylates EIF2S1/eIF-2alpha. Interacts with host EIF2S1/eIF-2alpha; this interaction is crucial for the specific dephosphorylation of EIF2S1/eIF-2alpha by PPP1CA. Binds to proliferating cell nuclear antigen (PCNA), which may release host cells from growth arrest and facilitate viral replication. Interacts (via N-terminus) with host C1QBP and PRKCA. Interacts with protein UL31. Interacts with host TBK1. Interacts with host STING/TMEM173; this interaction inhibits the intracellular DNA sensing pathway. Interacts with host BECN1; this interaction modulates host autophagy.

The protein resides in the host cytoplasm. It is found in the host nucleus. The protein localises to the host nucleolus. Its subcellular location is the virion. In terms of biological role, inhibits the establishment of the immune response and of the integrated stress response (ISR) in the infected cell. Plays essential roles in viral nuclear egress to mediate capsid transit across the nuclear membrane. Facilitates nuclear egress cooperatively with host C1QBP and protein kinase C/PKC to induce lamin A/C phosphorylation and subsequent reorganization. In turn, lamina disassembles and nuclear egress occurs. Recruits the serine/threonine protein phosphatase PPP1CA/PP1-alpha to dephosphorylate the translation initiation factor EIF2S1/eIF-2alpha, thereby couteracting the host shutoff of protein synthesis involving double-stranded RNA-dependent protein kinase EIF2AK2/PKR. In turn, controls host IRF3 activation and subsequently inhibits host interferon response. Controls the DNA sensing pathway by interacting with and inhibiting host STING/TMEM173. Also down-modulates the host MHC class II proteins cell surface expression. Acts as a neurovirulence factor that has a profound effect on the growth of the virus in central nervous system tissue, by interacting with host BECN1 and thereby antagonizing the host autophagy response. The protein is Neurovirulence factor ICP34.5 (RL1) of Human herpesvirus 1 (strain CVG-2) (HHV-1).